A 1651-amino-acid chain; its full sequence is Alsin (1651 aa).

RCC1 repeat units lie at residues 59 to 108, 109 to 167, and 169 to 218; these read DGEV…AVTE, SGVV…ALSI, and REIW…ALVQ. The interval 444–476 is disordered; the sequence is REEQVKQESLQGKKSSSLMDIREEESEGGSRRL. Residues 450–461 show a composition bias toward polar residues; it reads QESLQGKKSSSL. A phosphoserine mark is found at S459, S460, S477, and S486. T504 is modified (phosphothreonine). 2 RCC1 repeats span residues 519–570 and 572–621; these read RTEV…ALTA and SQVY…FLVD. K527 is subject to N6-acetyllysine. The DH domain occupies 684–879; the sequence is GYIASLHELA…ESLALHLGKK (196 aa). The region spanning 895 to 1001 is the PH domain; the sequence is GKMTDSLRKP…RAISQAVDQA (107 aa). MORN repeat units lie at residues 1043–1065, 1066–1088, 1094–1116, 1117–1139, 1145–1167, 1169–1191, 1192–1214, and 1215–1238; these read YDGRWLSGKPHGRGVLKWPDGKV, YSGTFRNGLEDGYGEYRIPNKAL, YVGHWKEGKMCGQGVYSYASGEV, FEGCFQDNMRHGHGLLRSGKLTS, FIGQWVMDKKAGYGVFDDITRGE, YMGMWQDDACQGNGVVVTQFGLY, YEGNFHLNKMMGNGVLLSEDDTI, and YEGEFSDDWTLCGKGTLTMPNGDY. S1329 is modified (phosphoserine). One can recognise a VPS9 domain in the interval 1507–1651; that stretch reads KQPDIALLGF…YYQIQREKLN (145 aa).

As to quaternary structure, forms a heteromeric complex with ALS2CL. Interacts with ALS2CL.

Its function is as follows. May act as a GTPase regulator. Controls survival and growth of spinal motoneurons. This is Alsin (Als2) from Rattus norvegicus (Rat).